A 190-amino-acid chain; its full sequence is Acyl-acyl carrier protein thioesterase ATL3, chloroplastic (190 aa).

The N-terminal 49 residues, 1 to 49, are a transit peptide targeting the chloroplast; sequence MFLQVTGTATPAMPAVVFLNSWRRPLSIPLRSVKTFKPLAFFDLKGGKG. The active site involves Asp-66.

Belongs to the 4-hydroxybenzoyl-CoA thioesterase family. In terms of tissue distribution, highly expressed in stems and flowers and at lower levels in rosette leaves, cauline leaves and siliques.

It is found in the plastid. The protein resides in the chloroplast. In terms of biological role, acyl-ACP thioesterase involved in the production of fatty acids and beta-keto fatty acids. Can produce fatty acids of long chain (14:1 and 16:1) and beta-keto fatty acids of medium to long chain (8:0, 10:0, 12:0, 12:1, 14:0 and 16:0) when expressed in a heterologous organism (E.coli). Possesses thioesterase activity for lauroyl-ACP (12:0-ACP) in vitro. May play a role in the generation of long fatty acids in the chloroplast. In Arabidopsis thaliana (Mouse-ear cress), this protein is Acyl-acyl carrier protein thioesterase ATL3, chloroplastic.